Here is a 423-residue protein sequence, read N- to C-terminus: Serine--tRNA ligase (423 aa).

230–232 (TAE) is a binding site for L-serine. 261–263 (RSE) contributes to the ATP binding site. Residue E284 coordinates L-serine. 348 to 351 (EISS) serves as a coordination point for ATP. S383 provides a ligand contact to L-serine.

This sequence belongs to the class-II aminoacyl-tRNA synthetase family. Type-1 seryl-tRNA synthetase subfamily. Homodimer. The tRNA molecule binds across the dimer.

It is found in the cytoplasm. The enzyme catalyses tRNA(Ser) + L-serine + ATP = L-seryl-tRNA(Ser) + AMP + diphosphate + H(+). The catalysed reaction is tRNA(Sec) + L-serine + ATP = L-seryl-tRNA(Sec) + AMP + diphosphate + H(+). It participates in aminoacyl-tRNA biosynthesis; selenocysteinyl-tRNA(Sec) biosynthesis; L-seryl-tRNA(Sec) from L-serine and tRNA(Sec): step 1/1. Functionally, catalyzes the attachment of serine to tRNA(Ser). Is also able to aminoacylate tRNA(Sec) with serine, to form the misacylated tRNA L-seryl-tRNA(Sec), which will be further converted into selenocysteinyl-tRNA(Sec). The chain is Serine--tRNA ligase from Levilactobacillus brevis (strain ATCC 367 / BCRC 12310 / CIP 105137 / JCM 1170 / LMG 11437 / NCIMB 947 / NCTC 947) (Lactobacillus brevis).